The primary structure comprises 346 residues: Large ribosomal subunit protein uL10 (346 aa).

Residues 305–346 (EVPAAPAPEAKEEKKEEAEEEEEEKKEVSEEDLSAGLGALFG) form a disordered region. Over residues 322-337 (AEEEEEEKKEVSEEDL) the composition is skewed to acidic residues.

This sequence belongs to the universal ribosomal protein uL10 family. As to quaternary structure, part of the 50S ribosomal subunit. Forms part of the ribosomal stalk which helps the ribosome interact with GTP-bound translation factors. Forms a heptameric L10(L12)2(L12)2(L12)2 complex, where L10 forms an elongated spine to which the L12 dimers bind in a sequential fashion.

Functionally, forms part of the ribosomal stalk, playing a central role in the interaction of the ribosome with GTP-bound translation factors. The chain is Large ribosomal subunit protein uL10 from Ignicoccus hospitalis (strain KIN4/I / DSM 18386 / JCM 14125).